A 305-amino-acid polypeptide reads, in one-letter code: Elongation factor Ts (305 aa).

Residues 79 to 82 (TDFV) are involved in Mg(2+) ion dislocation from EF-Tu.

The protein belongs to the EF-Ts family.

The protein localises to the cytoplasm. Its function is as follows. Associates with the EF-Tu.GDP complex and induces the exchange of GDP to GTP. It remains bound to the aminoacyl-tRNA.EF-Tu.GTP complex up to the GTP hydrolysis stage on the ribosome. The polypeptide is Elongation factor Ts (Brucella suis biovar 1 (strain 1330)).